The sequence spans 580 residues: PX domain-containing protein kinase-like protein (580 aa).

Residues 14 to 126 form the PX domain; sequence LDDTVPLTAA…KFLDPNNYSA (113 aa). The Protein kinase domain maps to 88–481; the sequence is FIAERQKGLQ…VENSEEQPVK (394 aa). Positions 433 to 551 are disordered; it reads EQKQIHQHRR…LPQAVNGVNR (119 aa). Composition is skewed to basic residues over residues 437–448 and 457–469; these read IHQHRRLTRAQS and KRRK…KSKR. Residues 483-514 are compositionally biased toward low complexity; that stretch reads SNANNSAGSGASSPLTSPSSPTPPSTAGLSSA. The span at 515–531 shows a compositional bias: pro residues; the sequence is LPPPPPPPPPPPPPAGP. Residues 549–568 enclose the WH2 domain; the sequence is VNRGALLSSIQNFQKGTLRK.

The protein belongs to the protein kinase superfamily.

Its subcellular location is the cytoplasm. The protein localises to the cell membrane. Functionally, binds to and modulates brain Na,K-ATPase subunits ATP1B1 and ATP1B3 and may thereby participate in the regulation of electrical excitability and synaptic transmission. May not display kinase activity. This chain is PX domain-containing protein kinase-like protein, found in Rattus norvegicus (Rat).